We begin with the raw amino-acid sequence, 155 residues long: MSQVILDLQLACEDNSGLPEESQFQKWLDAVIPQFQEESEVTIRVVDEAESHELNLTYRGKDKPTNVLSFPFEAPPGIELPLLGDLIICRQVVEQEAKEQQKPLDAHWAHMVIHGSLHLLGYDHIEDEEAEEMESLETEIMLALGYEDPYIAEKE.

Zn(2+) contacts are provided by histidine 114, histidine 118, and histidine 124.

It belongs to the endoribonuclease YbeY family. Zn(2+) is required as a cofactor.

It is found in the cytoplasm. Functionally, single strand-specific metallo-endoribonuclease involved in late-stage 70S ribosome quality control and in maturation of the 3' terminus of the 16S rRNA. The chain is Endoribonuclease YbeY from Enterobacter sp. (strain 638).